The chain runs to 254 residues: N(G),N(G)-dimethylarginine dimethylaminohydrolase (254 aa).

Residues Leu18, Asp60, 65–66 (ED), Arg85, and Arg132 contribute to the substrate site. The active-site Proton donor is His162. Position 162 (His162) interacts with Zn(2+). Ile243 is a substrate binding site. Position 249 (Cys249) interacts with Zn(2+). The Nucleophile role is filled by Cys249.

Belongs to the DDAH family. As to quaternary structure, homodimer.

It carries out the reaction N(omega),N(omega)-dimethyl-L-arginine + H2O = dimethylamine + L-citrulline. It catalyses the reaction N(omega)-methyl-L-arginine + H2O = L-citrulline + methylamine. Inhibited by zinc ions. Competitively inhibited by lysine. Hydrolyzes N(G),N(G)-dimethyl-L-arginine (ADMA) and N(G)-monomethyl-L-arginine (MMA). This is N(G),N(G)-dimethylarginine dimethylaminohydrolase from Pseudomonas aeruginosa (strain ATCC 15692 / DSM 22644 / CIP 104116 / JCM 14847 / LMG 12228 / 1C / PRS 101 / PAO1).